Consider the following 185-residue polypeptide: Inner membrane lipoprotein DcrB (185 aa).

Positions 1 to 19 are cleaved as a signal peptide; sequence MRNLVKYVGIGLLVMGLAA. C20 is lipidated: N-palmitoyl cysteine. Residue C20 is the site of S-diacylglycerol cysteine attachment.

Belongs to the DcrB family.

The protein localises to the cell membrane. Plays a role in cell envelope biogenesis, maintenance of cell envelope integrity and membrane homeostasis. Essential for lipoprotein maturation under conditions where membrane fluidity may be altered. The sequence is that of Inner membrane lipoprotein DcrB from Shigella flexneri.